A 295-amino-acid chain; its full sequence is uncharacterized protein (295 aa).

This is an uncharacterized protein from Acanthamoeba polyphaga (Amoeba).